The primary structure comprises 66 residues: Small archaeal modifier protein 2 (66 aa).

Lys58 participates in a covalent cross-link: Glycyl lysine isopeptide (Lys-Gly) (interchain with G-Cter in SAMP2). Residue Gly66 is modified to 1-thioglycine; alternate. Residue Gly66 is modified to Glycyl adenylate; alternate. Gly66 is covalently cross-linked (Glycyl lysine isopeptide (Gly-Lys) (interchain with K-? in acceptor proteins); alternate).

As to quaternary structure, monomer. Monomeric and polymeric forms interact with NcsA. Post-translationally, the C-terminal glycine is likely acyl-adenylated (-COAMP) by UbaA, and also probably thiocarboxylated (-COSH) to function in sulfur transfer.

In terms of biological role, functions as a protein modifier covalently attached to lysine residues of substrate proteins, as well as a sulfur carrier in tRNA thiolation. The protein modification process is termed sampylation and involves the formation of an isopeptide bond between the SAMP2 C-terminal glycine carboxylate and the epsilon-amino group of lysine residues on target proteins. Is able to form polymeric chains with itself at Lys-58, similar to ubiquitin and other ubiquitin-like proteins. May serve as a proteolytic signal in the cell to target proteins for degradation by proteasomes. The protein is Small archaeal modifier protein 2 (samp2) of Haloferax volcanii (strain ATCC 29605 / DSM 3757 / JCM 8879 / NBRC 14742 / NCIMB 2012 / VKM B-1768 / DS2) (Halobacterium volcanii).